The following is an 878-amino-acid chain: E3 ubiquitin-protein ligase BRE1-like 1 (878 aa).

The tract at residues 1 to 21 (MASTGEPDRKRRHFSSISPSE) is disordered. Coiled coils occupy residues 48 to 76 (QNLK…IKEK), 200 to 261 (QLAL…ELQQ), 293 to 382 (SDRE…EKLQ), and 537 to 624 (LDMY…ILKS). An RING-type zinc finger spans residues 826-865 (CKACNDRPKEVVITKCYHLFCNPCVQKLTGTRQKKCPTCS).

The protein belongs to the BRE1 family. In terms of assembly, may act as a tetramer consisting of two copies of HUB1 and two copies of HUB2. Interacts with MED21. In terms of tissue distribution, ubiquitously expressed.

The protein localises to the nucleus. It carries out the reaction S-ubiquitinyl-[E2 ubiquitin-conjugating enzyme]-L-cysteine + [acceptor protein]-L-lysine = [E2 ubiquitin-conjugating enzyme]-L-cysteine + N(6)-ubiquitinyl-[acceptor protein]-L-lysine.. Its pathway is protein modification; protein ubiquitination. Its function is as follows. E3 ubiquitin-protein ligase that monoubiquitinates H2B to form H2BK143ub1. H2BK143ub1 gives a specific tag for epigenetic transcriptional activation and is also prerequisite for H3K4me and maybe H3K79me. It thereby plays a central role in histone code and gene regulation. Forms a ubiquitin ligase complex in cooperation with the E2 enzyme UBC2/RAD6. Required for the regulation of flowering time and defense against necrotrophic fungal pathogens. Involved in the control of seed dormancy and germination. This is E3 ubiquitin-protein ligase BRE1-like 1 (HUB1) from Arabidopsis thaliana (Mouse-ear cress).